Here is a 296-residue protein sequence, read N- to C-terminus: Peptide transport system permease protein SapC (296 aa).

The Cytoplasmic segment spans residues 1-28; it reads MPYDSVYSEKRPPGTLRTAWRKFYSDAS. Residues 29–49 form a helical membrane-spanning segment; that stretch reads AMVGLYGCAGLAVLCIFGGWF. The Periplasmic segment spans residues 50-98; the sequence is APYGIDQQFLGYQLLPPSWSRYGEVSFFLGTDDLGRDVLSRLLSGAAPT. Residues 99–119 form a helical membrane-spanning segment; it reads VGGAFVVTLAATICGLVLGTF. The ABC transmembrane type-1 domain maps to 99 to 284; it reads VGGAFVVTLA…ISVLLVNLLG (186 aa). The Cytoplasmic portion of the chain corresponds to 120-133; it reads AGATHGLRSAVLNH. Residues 134–154 form a helical membrane-spanning segment; the sequence is ILDTLLAIPSLLLAIIVVAFA. Topologically, residues 155–196 are periplasmic; that stretch reads GPSLSHAMFAVWLALLPRMVRSIYSMVHDELEKEYVIAARLD. The chain crosses the membrane as a helical span at residues 197-217; the sequence is GASTLNILWFAVMPNITAGLV. Over 218–222 the chain is Cytoplasmic; the sequence is TEITR. The helical transmembrane segment at 223-243 threads the bilayer; that stretch reads ALSMAILDIAALGFLDLGAQL. Topologically, residues 244-257 are periplasmic; the sequence is PSPEWGAMLGDALE. A helical membrane pass occupies residues 258 to 278; sequence LIYVAPWTVMLPGAAIMISVL. Residues 279 to 296 are Cytoplasmic-facing; the sequence is LVNLLGDGVRRAIIAGVE.

The protein belongs to the binding-protein-dependent transport system permease family. OppBC subfamily.

The protein localises to the cell inner membrane. Involved in a peptide intake transport system that plays a role in the resistance to antimicrobial peptides. The sequence is that of Peptide transport system permease protein SapC (sapC) from Escherichia coli O6:H1 (strain CFT073 / ATCC 700928 / UPEC).